The chain runs to 30 residues: Cycloviolacin-H1 (30 aa).

Residues 1–30 (GIPCGESCVYIPCLTSAIGCSCKSKVCYRN) constitute a cross-link (cyclopeptide (Gly-Asn)). Intrachain disulfides connect C4/C20, C8/C22, and C13/C27.

This sequence belongs to the cyclotide family. Bracelet subfamily. This is a cyclic peptide.

Probably participates in a plant defense mechanism. The protein is Cycloviolacin-H1 of Viola hederacea (Australian violet).